A 345-amino-acid polypeptide reads, in one-letter code: N-glycosylase/DNA lyase (345 aa).

Asparagine 149, arginine 154, and arginine 204 together coordinate DNA. Lysine 249 serves as the catalytic Schiff-base intermediate with DNA. 8-oxoguanine is bound by residues proline 266 and aspartate 268. DNA-binding residues include histidine 270 and glutamine 287. Residues glutamine 315 and phenylalanine 319 each coordinate 8-oxoguanine.

It belongs to the type-1 OGG1 family. Highest expression in testis.

It is found in the nucleus. The protein resides in the nucleoplasm. Its subcellular location is the nucleus speckle. It localises to the nucleus matrix. The enzyme catalyses 2'-deoxyribonucleotide-(2'-deoxyribose 5'-phosphate)-2'-deoxyribonucleotide-DNA = a 3'-end 2'-deoxyribonucleotide-(2,3-dehydro-2,3-deoxyribose 5'-phosphate)-DNA + a 5'-end 5'-phospho-2'-deoxyribonucleoside-DNA + H(+). Its function is as follows. DNA repair enzyme that incises DNA at 8-oxoG residues. Excises 7,8-dihydro-8-oxoguanine and 2,6-diamino-4-hydroxy-5-N-methylformamidopyrimidine (FAPY) from damaged DNA. Has a beta-lyase activity that nicks DNA 3' to the lesion. The polypeptide is N-glycosylase/DNA lyase (Ogg1) (Mus musculus (Mouse)).